Here is a 729-residue protein sequence, read N- to C-terminus: Fatty acid oxidation complex subunit alpha (729 aa).

The interval 1 to 189 (MLYKGDTLYL…KIGLVDGVVK (189 aa)) is enoyl-CoA hydratase/isomerase. Residue Asp296 participates in substrate binding. The interval 311 to 729 (ETPKQAAVLG…ARAVGDLKTA (419 aa)) is 3-hydroxyacyl-CoA dehydrogenase. NAD(+) is bound by residues Met324, Asp343, 400-402 (VVE), Lys407, and Ser429. His450 (for 3-hydroxyacyl-CoA dehydrogenase activity) is an active-site residue. Asn453 serves as a coordination point for NAD(+). Asn500 and Tyr660 together coordinate substrate.

It in the N-terminal section; belongs to the enoyl-CoA hydratase/isomerase family. In the C-terminal section; belongs to the 3-hydroxyacyl-CoA dehydrogenase family. In terms of assembly, heterotetramer of two alpha chains (FadB) and two beta chains (FadA).

The enzyme catalyses a (3S)-3-hydroxyacyl-CoA + NAD(+) = a 3-oxoacyl-CoA + NADH + H(+). It carries out the reaction a (3S)-3-hydroxyacyl-CoA = a (2E)-enoyl-CoA + H2O. The catalysed reaction is a 4-saturated-(3S)-3-hydroxyacyl-CoA = a (3E)-enoyl-CoA + H2O. It catalyses the reaction (3S)-3-hydroxybutanoyl-CoA = (3R)-3-hydroxybutanoyl-CoA. The enzyme catalyses a (3Z)-enoyl-CoA = a 4-saturated (2E)-enoyl-CoA. It carries out the reaction a (3E)-enoyl-CoA = a 4-saturated (2E)-enoyl-CoA. It functions in the pathway lipid metabolism; fatty acid beta-oxidation. Its function is as follows. Involved in the aerobic and anaerobic degradation of long-chain fatty acids via beta-oxidation cycle. Catalyzes the formation of 3-oxoacyl-CoA from enoyl-CoA via L-3-hydroxyacyl-CoA. It can also use D-3-hydroxyacyl-CoA and cis-3-enoyl-CoA as substrate. In Escherichia fergusonii (strain ATCC 35469 / DSM 13698 / CCUG 18766 / IAM 14443 / JCM 21226 / LMG 7866 / NBRC 102419 / NCTC 12128 / CDC 0568-73), this protein is Fatty acid oxidation complex subunit alpha.